A 481-amino-acid polypeptide reads, in one-letter code: Phosphoenolpyruvate phosphatase (481 aa).

The signal sequence occupies residues 1–36 (MPIYTSRSCFYLLLFHIILLCSVDKTLCRQTSSFVR). N109 carries N-linked (GlcNAc...) asparagine glycosylation. Fe cation is bound by residues D168, D195, and Y198. D195 is a Zn(2+) binding site. N206 is a glycosylation site (N-linked (GlcNAc...) asparagine). N232 and H317 together coordinate Zn(2+). Residue N232 coordinates substrate. Catalysis depends on H327, which acts as the Proton donor. Zn(2+) is bound at residue H354. 354–356 (HVH) provides a ligand contact to substrate. H356 contributes to the Fe cation binding site. N-linked (GlcNAc...) asparagine glycosylation is found at N370 and N427.

Belongs to the metallophosphoesterase superfamily. Purple acid phosphatase family.

It is found in the vacuole lumen. It carries out the reaction phosphoenolpyruvate + H2O = pyruvate + phosphate. In terms of biological role, phosphoenolpyruvate phosphatase that probably operates in the vacuole to release phosphate from phosphoenolpyruvate (PEP) under phosphorus starvation. This Allium cepa (Onion) protein is Phosphoenolpyruvate phosphatase (ACPEPP).